A 1423-amino-acid chain; its full sequence is MNELTNFANPVAKPETFDQIQIGIASPERIRSWSFGEIKKPETINYRTFKPERDGLFCARIFGPIKDYECLCGKYKRMKYKGIVCEKCGVEVTVSKVRRERMGHIELAAPVAHIWFLKSLPSRIGLLLDMQLKQLERVLYFESYIVIEPGLTPLEKYQLLNEDELLEAQDEYGEDAFSAGIGAEAVRRMLEELDLEGEKEDLLKELAETKSELKPKKIIKRLKVVESFLESGNRPEWMILEVIPVIPPDLRPLVPLDGGRFATSDLNDLYRRVINRNNRLKRLMELRAPDIIVRNEKRMLQESVDALFDNGRRGRTITGANKRPLKSLSDMLKGKQGRFRQNLLGKRVDYSGRSVIVTGPELKLHQCGLPKKMALELFKPFIYARLDAKGLSMTLKQAKKWVEKERKEVWDILDEVIREHPVLLNRAPTLHRLGIQAFEPVLIEGKAIQLHPLVCSAFNADFDGDQMAVHVPLSLEAQLEARVLMMSTNNILSPANGKPIIVPSQDMVLGLYYLSMLKEGEPGEGSLIADMQEVHQALAAKAVTLHTKIISRVPQTDEDGNQYMKRVETTPGRMLLGETLPKSHKVPFETVNRLLTKKEIGDVIDIVYRHTGQKETVLFADAIMALGFRHAFQAGISFGKDDMIIPEAKEKEVEETRLLVKDFEQQYQDGLITQQEKYNKVIDAWSRCGDRVAAEMMKEISAVKKGADGREKPINAIYMMAHSGARGSAAQIKQLAGMRGLMAKPSGEIIETPIISNFKEGLTVLEYFNSTHGARKGLADTALKTANSGYLTRRLVDVSQDCVVVEVDCGTDRALDMKAIVQGGATIASLGERILGRTAAEDIVDSKTNEVLIAEGTLLDEAMVAAVEAIGIQSVKIRSPLVCESKGGVCAACYGRDLARGTPVNIGEAVGVIAAQSIGEPGTQLTMRTFHIGGAAQLNEQSNLESVADGSIEYRELRTITDPRGRRVSLSRSGEVAIIDSEGRERATHRLPYGAHLLLDDGAAVAKGDRIAEWDPFTMPVITETGGIVKYQDLIDNQTLTEQTDEATGISQKVVIEYRATSRKEDLRPRLTLLDDSSGETARYMLAPGAMLSVEDGQEVKAGEVLARVSRESAKTRDITGGLPRVAELFEARKPKENAIIAKVSGRVEFGKDYKAKRKIIIRPDDGSDAVEYLVPKSKVIDVQEGDYVKRGDNLIGGSPDPHDILEVLGIEPLAEYLVSEIQEVYRLQGVKINDKHIETIVRQMLQKVEITDGGDTTLLPGEQVDREEMDEINAKADAEGRTIAQGKPVLLGITKASLQTRSFISAASFQETTRVLTDASVQGKVDTLNGLKENVIVGRLIPAGTGAGMSRLRVTASSRDAALRAAQRNWQESLIAPQTAAEEHAAELRQPVQADTGDDPLGAVVGESHGTDADAGDYLTEE.

Residues C70, C72, C85, and C88 each coordinate Zn(2+). The Mg(2+) site is built by D461, D463, and D465. Residues C809, C883, C890, and C893 each coordinate Zn(2+). The segment at 1383-1423 (EEHAAELRQPVQADTGDDPLGAVVGESHGTDADAGDYLTEE) is disordered.

This sequence belongs to the RNA polymerase beta' chain family. As to quaternary structure, the RNAP catalytic core consists of 2 alpha, 1 beta, 1 beta' and 1 omega subunit. When a sigma factor is associated with the core the holoenzyme is formed, which can initiate transcription. Mg(2+) is required as a cofactor. Requires Zn(2+) as cofactor.

It carries out the reaction RNA(n) + a ribonucleoside 5'-triphosphate = RNA(n+1) + diphosphate. Functionally, DNA-dependent RNA polymerase catalyzes the transcription of DNA into RNA using the four ribonucleoside triphosphates as substrates. The polypeptide is DNA-directed RNA polymerase subunit beta' (Rhizorhabdus wittichii (strain DSM 6014 / CCUG 31198 / JCM 15750 / NBRC 105917 / EY 4224 / RW1) (Sphingomonas wittichii)).